Reading from the N-terminus, the 404-residue chain is Argininosuccinate synthase (404 aa).

9 to 17 is an ATP binding site; the sequence is AYSGGLDTS. L-citrulline is bound at residue Tyr-86. Residue Gly-116 coordinates ATP. L-aspartate is bound by residues Thr-118, Asn-122, and Asp-123. Residue Asn-122 coordinates L-citrulline. Residues Arg-126, Ser-174, Ser-183, Glu-259, and Tyr-271 each coordinate L-citrulline.

Belongs to the argininosuccinate synthase family. Type 1 subfamily. Homotetramer.

Its subcellular location is the cytoplasm. It carries out the reaction L-citrulline + L-aspartate + ATP = 2-(N(omega)-L-arginino)succinate + AMP + diphosphate + H(+). The protein operates within amino-acid biosynthesis; L-arginine biosynthesis; L-arginine from L-ornithine and carbamoyl phosphate: step 2/3. This is Argininosuccinate synthase from Listeria innocua serovar 6a (strain ATCC BAA-680 / CLIP 11262).